Reading from the N-terminus, the 214-residue chain is Urease accessory protein UreG (214 aa).

Residues 1–20 are disordered; it reads MSQLHAVPGRTKKLPPLRVG. 23 to 30 is a GTP binding site; sequence GPVGSGKT.

This sequence belongs to the SIMIBI class G3E GTPase family. UreG subfamily. As to quaternary structure, homodimer. UreD, UreF and UreG form a complex that acts as a GTP-hydrolysis-dependent molecular chaperone, activating the urease apoprotein by helping to assemble the nickel containing metallocenter of UreC. The UreE protein probably delivers the nickel.

The protein resides in the cytoplasm. In terms of biological role, facilitates the functional incorporation of the urease nickel metallocenter. This process requires GTP hydrolysis, probably effectuated by UreG. The polypeptide is Urease accessory protein UreG (Leptothrix cholodnii (strain ATCC 51168 / LMG 8142 / SP-6) (Leptothrix discophora (strain SP-6))).